The following is a 572-amino-acid chain: Methionine--tRNA ligase (572 aa).

The 'HIGH' region motif lies at 11–21; that stretch reads PYINGIKHLGN. Zn(2+) is bound by residues C143, C146, C156, and C159. The 'KMSKS' region motif lies at 346–350; sequence QFSTS. T349 lines the ATP pocket.

This sequence belongs to the class-I aminoacyl-tRNA synthetase family. MetG type 1 subfamily. Monomer. Zn(2+) serves as cofactor.

It localises to the cytoplasm. It catalyses the reaction tRNA(Met) + L-methionine + ATP = L-methionyl-tRNA(Met) + AMP + diphosphate. In terms of biological role, is required not only for elongation of protein synthesis but also for the initiation of all mRNA translation through initiator tRNA(fMet) aminoacylation. This chain is Methionine--tRNA ligase, found in Roseobacter denitrificans (strain ATCC 33942 / OCh 114) (Erythrobacter sp. (strain OCh 114)).